A 98-amino-acid chain; its full sequence is Integration host factor subunit alpha (98 aa).

The disordered stretch occupies residues 52–73 (FDLREKNQRPGRNPKTGEDIPI).

This sequence belongs to the bacterial histone-like protein family. As to quaternary structure, heterodimer of an alpha and a beta chain.

This protein is one of the two subunits of integration host factor, a specific DNA-binding protein that functions in genetic recombination as well as in transcriptional and translational control. The protein is Integration host factor subunit alpha of Aeromonas hydrophila subsp. hydrophila (strain ATCC 7966 / DSM 30187 / BCRC 13018 / CCUG 14551 / JCM 1027 / KCTC 2358 / NCIMB 9240 / NCTC 8049).